A 482-amino-acid chain; its full sequence is Probable cytosol aminopeptidase (482 aa).

Mn(2+) contacts are provided by K251 and D256. K263 is a catalytic residue. Residues D274, D333, and E335 each contribute to the Mn(2+) site. The active site involves R337.

The protein belongs to the peptidase M17 family. Requires Mn(2+) as cofactor.

Its subcellular location is the cytoplasm. The enzyme catalyses Release of an N-terminal amino acid, Xaa-|-Yaa-, in which Xaa is preferably Leu, but may be other amino acids including Pro although not Arg or Lys, and Yaa may be Pro. Amino acid amides and methyl esters are also readily hydrolyzed, but rates on arylamides are exceedingly low.. It carries out the reaction Release of an N-terminal amino acid, preferentially leucine, but not glutamic or aspartic acids.. In terms of biological role, presumably involved in the processing and regular turnover of intracellular proteins. Catalyzes the removal of unsubstituted N-terminal amino acids from various peptides. The sequence is that of Probable cytosol aminopeptidase from Acinetobacter baylyi (strain ATCC 33305 / BD413 / ADP1).